The primary structure comprises 312 residues: MPRLSEPSPYVEFDRKQWRALRMSTPLALTEEELIGLRGLGEQIDLLEVEEVYLPLARLIHLQVAARQRLFAATAEFLGEPQQNPGRPVPFIIGVAGSVAVGKSTTARVLQALLARWDHHTRVDLVTTDGFLYPNAELGRRNLMHRKGFPESYNRRALMRFVTSVKSGADYACAPVYSHLRYDTIPGAKHVVRHPDILILEGLNVLQTGPTLMVSDLFDFSLYVDARIQDIEQWYVSRFLAMRGTAFADPESHFHHYSALTDSKAIIAAREIWRSINRPNLVENILPTRPRATLVLRKDADHSINRLRLRKL.

97-104 (GSVAVGKS) provides a ligand contact to ATP.

This sequence belongs to the prokaryotic pantothenate kinase family.

It localises to the cytoplasm. It catalyses the reaction (R)-pantothenate + ATP = (R)-4'-phosphopantothenate + ADP + H(+). It functions in the pathway cofactor biosynthesis; coenzyme A biosynthesis; CoA from (R)-pantothenate: step 1/5. The chain is Pantothenate kinase (coaA) from Mycobacterium leprae (strain TN).